The following is a 254-amino-acid chain: Pyruvate dehydrogenase complex repressor (254 aa).

Positions Pro-9–Ser-77 constitute an HTH gntR-type domain. The segment at residues Glu-37–Gln-56 is a DNA-binding region (H-T-H motif).

Functionally, transcriptional repressor for the pyruvate dehydrogenase complex genes aceEF and lpd. The sequence is that of Pyruvate dehydrogenase complex repressor (pdhR) from Salmonella typhi.